A 257-amino-acid chain; its full sequence is Enterotoxin type A (257 aa).

The first 24 residues, 1–24 (MKKTAFTLLLFIALTLTTSPLVNG), serve as a signal peptide directing secretion. A disulfide bridge connects residues C120 and C130. Positions 211, 249, and 251 each coordinate Zn(2+).

It belongs to the staphylococcal/streptococcal toxin family. As to quaternary structure, monomer. Interacts with MHC class II molecules alpha/HLA-DRB1 and beta/HLA-DRA chains. The interaction with MHC-II molecules occurs at both zinc-dependent and zinc-independent sites. Interacts with T-cell receptor beta variable 7-9/TRBV7-9. Zn(2+) is required as a cofactor.

The protein localises to the secreted. Functionally, staphylococcal enterotoxin that activates the host immune system by binding as unprocessed molecules to major histocompatibility (MHC) complex class II and T-cell receptor (TCR) molecules. In turn, waves of cellular activation, cytokine production, and migration into the lung tissue and airways occur via alphabeta T-cells. Also causes the intoxication staphylococcal food poisoning syndrome. The illness is characterized by high fever, hypotension, diarrhea, shock, and in some cases death. The polypeptide is Enterotoxin type A (entA) (Staphylococcus aureus).